A 4903-amino-acid polypeptide reads, in one-letter code: Histone-lysine N-methyltransferase 2C (4903 aa).

2 disordered regions span residues 1–116 (MSSE…SEES) and 159–202 (LTLP…PPQQ). Residues 13–28 (QPPPAPPEEPGAPAPS) show a composition bias toward pro residues. A phosphoserine mark is found at serine 28 and serine 46. The a.T hook DNA-binding region spans 34–46 (KRPRGRPRKDGAS). Residues 50–59 (RARKKPRSRG) show a composition bias toward basic residues. Residues 64 to 81 (EDEDSMDGLETTETENIV) show a composition bias toward acidic residues. 2 positions are modified to phosphoserine: serine 89 and serine 113. Over residues 101–116 (SKQPVSALQRSVSEES) the composition is skewed to polar residues. The segment at 226–261 (ELSLVGLPDAIDVQALFDSTGTCWAHHRCVEWSLGI) adopts a C2HC pre-PHD-type 1; degenerate zinc-finger fold. PHD-type zinc fingers lie at residues 282–330 (ERCA…PEHI), 340–390 (DANC…CKVC), 387–437 (CKVC…CRIC), and 463–519 (DNLC…CKHL). Residues 343-388 (CAVCDSPGDLLDQFFCTTCGQHYHGMCLDIAVTPLKRAGWQCPECK) form an RING-type zinc finger. Residues 435-488 (RICIECGTRSSTQWHHNCLICDTCYQQQDNLCPFCGKCYHPELQKDMLHCNMCK) enclose the DHHC domain. Positions 671–703 (SEVASKELSPPKSAPETAAPEALLSPHSERSLS) are disordered. Lysine 751 bears the N6-acetyllysine mark. A compositionally biased stretch (basic residues) spans 824-835 (TKRKFSPGRPRS). 2 disordered regions span residues 824–857 (TKRK…DTSE) and 882–904 (GFPG…GRSK). The span at 838 to 848 (GAWSNHNTVSP) shows a compositional bias: polar residues. Residue serine 847 is modified to Phosphoserine. PHD-type zinc fingers lie at residues 950-1003 (QDMC…CTVC), 1000-1050 (CTVC…CVWC), and 1077-1132 (LSSC…CRPY). The interval 1208–1318 (AVLQTPPDIQ…PSRDDGWREQ (111 aa)) is disordered. The segment covering 1217-1263 (QSEHSRDGEMDDSREGELMDCDGKSESSPEREAGDDETKGIEGTDAI) has biased composition (basic and acidic residues). Serine 1294 carries the post-translational modification Phosphoserine. The span at 1309–1318 (PSRDDGWREQ) shows a compositional bias: basic and acidic residues. Residues 1330 to 1352 (VAENTDKIKKRYRKRKNKLEETF) are a coiled coil. 2 disordered regions span residues 1397-1419 (SDPL…ADDP) and 1447-1473 (HSDI…RPLT). Composition is skewed to polar residues over residues 1406–1415 (TSAKPGTQGT) and 1455–1471 (ADAS…SSRP). Lysine 1497 carries the N6-acetyllysine modification. Disordered regions lie at residues 1594–1617 (NAIA…ENDT) and 1698–1757 (VQMS…AKIE). The span at 1599-1617 (DPNSSWAPTTPSMEGENDT) shows a compositional bias: polar residues. The segment covering 1707 to 1717 (RQQQQDSIDPS) has biased composition (low complexity). Basic and acidic residues predominate over residues 1718–1742 (SRIDSDLFKDPLKQRESEHEQEWKF). Residues 1743–1790 (RQQMRQKSKQQAKIEATQKLEQVKNEQQQQQQQQQQQQQQQLASQHLL) are a coiled coil. Lysine 1761 carries the post-translational modification N6-acetyllysine. Residues 1791-2375 (VAPGSDTPSS…MSQADTEKLR (585 aa)) are disordered. Residues 1796-1819 (DTPSSGAQSPLTPQAGNGNVSPAQ) show a composition bias toward polar residues. Residues 1855 to 1886 (PSRIPVQESLSQSQNSQPPSPQMFSPGSSHSR) are compositionally biased toward low complexity. Phosphoserine is present on serine 1983. Positions 1986-2001 (ISEQSTKGPLTTGTSD) are enriched in polar residues. The residue at position 2005 (lysine 2005) is an N6-acetyllysine. 3 stretches are compositionally biased toward polar residues: residues 2113–2124 (GTISRSASQDPY), 2137–2151 (SYSQ…NPDP), and 2325–2334 (GNFSTSSNLP). Low complexity predominate over residues 2335-2347 (VSSQGQQFSSVSQ). Residues 2355–2369 (SGGTDTQNTVNMSQA) are compositionally biased toward polar residues. Residues arginine 2447 and arginine 2563 each carry the asymmetric dimethylarginine modification. Disordered stretches follow at residues 2561–2668 (RSRL…DNLE), 2702–2736 (KDLD…NDPN), and 2786–2844 (VEPK…GDAD). Composition is skewed to polar residues over residues 2602-2611 (QPSQCLSNQL), 2621-2636 (PPSQ…QSSI), and 2653-2668 (PLST…DNLE). The segment covering 2788 to 2807 (PKTRDQGDKTMVLEDKDLPQ) has biased composition (basic and acidic residues). N6-acetyllysine is present on residues lysine 2796 and lysine 2803. Phosphoserine is present on serine 2822. Tyrosine 2824 bears the Phosphotyrosine mark. Basic and acidic residues predominate over residues 2825–2843 (SKEEIQSEIKNHDDSRGDA). N6-acetyllysine occurs at positions 2826 and 2862. A disordered region spans residues 2920–2953 (EKCDDSDIRPSGSSPPSLPISPSTHGSSLPPTLI). Residues 2929–2942 (PSGSSPPSLPISPS) show a composition bias toward low complexity. 2 coiled-coil regions span residues 3047-3074 (LLQD…QRSE) and 3166-3193 (NDSQ…YLEE). Over residues 3198–3214 (HRKSKKALSAKQRTAKK) the composition is skewed to basic residues. A disordered region spans residues 3198–3223 (HRKSKKALSAKQRTAKKAGREFPEED). Coiled coils occupy residues 3224 to 3270 (AEQL…QQCA) and 3387 to 3432 (FSES…QHCL). Disordered stretches follow at residues 3329–3407 (PGWQ…QERQ) and 3444–3910 (SQMP…QKMA). Residues 3391–3407 (FQERERKERLREQQERQ) are compositionally biased toward basic and acidic residues. A compositionally biased stretch (low complexity) spans 3464 to 3485 (LQQSPQHQQQIGPVLQQQNVQQ). 4 stretches are compositionally biased toward polar residues: residues 3486-3503 (GSVN…NEQR), 3515-3524 (PSASGGSPNF), 3557-3586 (PVAN…SLIQ), and 3632-3647 (LSET…PSEL). Composition is skewed to basic and acidic residues over residues 3697 to 3739 (AEAD…KIKD) and 3795 to 3804 (SSTKDGKLIE). Position 3709 is an N6-acetyllysine (lysine 3709). Positions 3871-3885 (MYSSSDSFTHLKQQN) are enriched in polar residues. Over residues 3890–3904 (PPTPPASLPPTPPPM) the composition is skewed to pro residues. Serine 4027 carries the phosphoserine modification. At arginine 4132 the chain carries Asymmetric dimethylarginine. Residues 4159-4184 (PNVPFPPTSNGLSGYKDSSHGPAEGA) form a disordered region. Phosphoserine is present on serine 4260. The segment at 4391–4431 (CRKCCFCHEEGDGLTDGPARLLNLDLDLWVHLNCALWSTEV) adopts a C2HC pre-PHD-type 2 zinc-finger fold. Residues 4452-4499 (MKCVFCHKTGATSGCHRFRCTNIYHFTCATKAQCMFFKDKTMLCPMHK) form a PHD-type 8 zinc finger. The 61-residue stretch at 4537–4597 (DHTFRVGSLI…CRYLCSIEEK (61 aa)) folds into the FYR N-terminal domain. The FYR C-terminal domain maps to 4598–4683 (DGRPVFVIRI…EACENYTFRY (86 aa)). The short motif at 4699–4704 (GCARSE) is the WDR5 interaction motif (WIN) element. In terms of domain architecture, SET spans 4763–4879 (SNVYLARSRI…KGEELCYDYK (117 aa)). S-adenosyl-L-methionine-binding positions include tyrosine 4817 and 4840 to 4841 (NH). Cysteine 4843, cysteine 4891, cysteine 4893, and cysteine 4898 together coordinate Zn(2+). Residues 4887 to 4903 (HKIPCHCGAVNCRKWMN) enclose the Post-SET domain.

It belongs to the class V-like SAM-binding methyltransferase superfamily. Histone-lysine methyltransferase family. TRX/MLL subfamily. Component of the MLL3 complex (also named ASCOM complex), at least composed of catalytic subunit KMT2C/MLL3, ASH2L, RBBP5, WDR5, NCOA6, DPY30, KDM6A, PAXIP1/PTIP, PAGR1 and alpha- and beta-tubulin. Forms a core complex with the evolutionary conserved subcomplex WRAD composed of WDR5, RBBP5, ASH2L/ASH2 and DPY30 subunits; WRAD differentially stimulates the methyltransferase activity. Interacts (via WIN motif) with WDR5. In terms of tissue distribution, in adult, detected in testis, kidney, spleen and lung, weakly expressed in brain and absent in heart and liver. First detected throughout the embryo at 8 dpc when expression is strong in forebrain neuroepithelium and absent in heart. Expressed in the eye lens between 10 and 14.5 dpc. By 13 dpc, expressed strongly in spinal cord, hand/foot plates and gonads.

The protein resides in the nucleus. The catalysed reaction is L-lysyl(4)-[histone H3] + S-adenosyl-L-methionine = N(6)-methyl-L-lysyl(4)-[histone H3] + S-adenosyl-L-homocysteine + H(+). In terms of biological role, histone methyltransferase that catalyzes methyl group transfer from S-adenosyl-L-methionine to the epsilon-amino group of 'Lys-4' of histone H3 (H3K4). Part of chromatin remodeling machinery predominantly forms H3K4me1 methylation marks at active chromatin sites where transcription and DNA repair take place. Likely plays a redundant role with KMT2D in enriching H3K4me1 mark on primed and active enhancer elements. In Mus musculus (Mouse), this protein is Histone-lysine N-methyltransferase 2C (Kmt2c).